The chain runs to 81 residues: MKTLLLTLVVVTIVCLDLGYTMTCCNQQSSQPKTTTNCAGNSCYKKTWSDHRGTIIERGCGCPQVKSGIKLECCHTNECNN.

The N-terminal stretch at 1 to 21 (MKTLLLTLVVVTIVCLDLGYT) is a signal peptide. 4 disulfide bridges follow: Cys-24/Cys-43, Cys-38/Cys-60, Cys-62/Cys-73, and Cys-74/Cys-79.

Belongs to the three-finger toxin family. Short-chain subfamily. Type I alpha-neurotoxin sub-subfamily. In terms of tissue distribution, expressed by the venom gland.

Its subcellular location is the secreted. In terms of biological role, binds to muscle nicotinic acetylcholine receptor (nAChR) and inhibit acetylcholine from binding to the receptor, thereby impairing neuromuscular transmission. The polypeptide is Short neurotoxin 2 (Hydrophis peronii (Spiny-headed seasnake)).